A 300-amino-acid chain; its full sequence is Ubiquitin thioesterase otu2 (300 aa).

Disordered regions lie at residues 23–73 (RKQL…QQED) and 89–141 (TAEK…SEKM). Over residues 48–61 (LSQKHATERQKLDK) the composition is skewed to basic and acidic residues. The segment covering 62–71 (GDEETNETQQ) has biased composition (acidic residues). The span at 89–109 (TAEKSSVQSSLNTKENTPQQP) shows a compositional bias: polar residues. Residues 115-141 (RQKERLERRKAEMKKMSEQAELESEKM) show a composition bias toward basic and acidic residues. Residues 161–298 (LVAVDIPADG…GAHYNSLLYR (138 aa)) form the OTU domain.

It localises to the cytoplasm. The catalysed reaction is Thiol-dependent hydrolysis of ester, thioester, amide, peptide and isopeptide bonds formed by the C-terminal Gly of ubiquitin (a 76-residue protein attached to proteins as an intracellular targeting signal).. Its function is as follows. Hydrolase that can remove conjugated ubiquitin from proteins and may therefore play an important regulatory role at the level of protein turnover by preventing degradation. The protein is Ubiquitin thioesterase otu2 (otu2) of Schizosaccharomyces pombe (strain 972 / ATCC 24843) (Fission yeast).